Reading from the N-terminus, the 292-residue chain is 33 kDa chaperonin (292 aa).

Cystine bridges form between Cys230–Cys232 and Cys263–Cys266.

Belongs to the HSP33 family. Under oxidizing conditions two disulfide bonds are formed involving the reactive cysteines. Under reducing conditions zinc is bound to the reactive cysteines and the protein is inactive.

It is found in the cytoplasm. In terms of biological role, redox regulated molecular chaperone. Protects both thermally unfolding and oxidatively damaged proteins from irreversible aggregation. Plays an important role in the bacterial defense system toward oxidative stress. This is 33 kDa chaperonin from Shigella boydii serotype 4 (strain Sb227).